A 191-amino-acid polypeptide reads, in one-letter code: Cell division protein SepF (191 aa).

Residues 153–178 (FPEEVSPSNISSKKTSPYSLETNTTP) show a composition bias toward polar residues. The segment at 153-191 (FPEEVSPSNISSKKTSPYSLETNTTPEPAWGESKLSAFS) is disordered.

This sequence belongs to the SepF family. As to quaternary structure, homodimer. Interacts with FtsZ.

It is found in the cytoplasm. Its function is as follows. Cell division protein that is part of the divisome complex and is recruited early to the Z-ring. Probably stimulates Z-ring formation, perhaps through the cross-linking of FtsZ protofilaments. Its function overlaps with FtsA. In Prochlorococcus marinus (strain MIT 9515), this protein is Cell division protein SepF.